The following is a 92-amino-acid chain: Protein LSO2 (92 aa).

Basic and acidic residues-rich tracts occupy residues 1 to 10 (MGKRFSESAA) and 38 to 72 (EASK…ERDA). The segment at 1 to 92 (MGKRFSESAA…KGGKGKRKMK (92 aa)) is disordered. The stretch at 17 to 80 (ARKRDQAHAK…DALLTAEEEQ (64 aa)) forms a coiled coil.

Belongs to the CCDC124 family. As to quaternary structure, associates with translationally inactive ribosomes in the nonrotated state. LSO2 bridges the decoding sites of the small with the GTPase activating center (GAC) of the large subunit. This position allows accommodation of the DOM34-dependent ribosome recycling system, which splits LSO2-containing ribosomes.

The protein localises to the nucleus. It is found in the cytoplasm. In terms of biological role, ribosome-binding protein involved in ribosome hibernation by associating with translationally inactive ribosomes. Required for translational recovery after starvation from stationary phase. May facilitate rapid translation reactivation by stabilizing the recycling-competent state of inactive ribosomes. This Saccharomyces cerevisiae (strain ATCC 204508 / S288c) (Baker's yeast) protein is Protein LSO2.